Consider the following 1145-residue polypeptide: Protein STU1 (1145 aa).

HEAT repeat units lie at residues 96–134 and 168–206; these read TLPL…EKYV and YVPV…KSDL. Disordered stretches follow at residues 226–271, 510–793, and 816–839; these read ELIP…GIDT, LLNK…VVDP, and PEPV…PAAS. Over residues 229-239 the composition is skewed to low complexity; the sequence is PTSSRPETPAA. Polar residues predominate over residues 535-545; sequence SKSTMGTSKPS. 3 stretches are compositionally biased toward low complexity: residues 580–594, 663–676, and 696–708; these read TTTT…SGAR, ASHA…SPSS, and QSQS…SSPS.

Belongs to the CLASP family. As to quaternary structure, interacts with microtubules.

The protein localises to the cytoplasm. It is found in the cytoskeleton. The protein resides in the nucleus. It localises to the spindle. Functionally, microtubule binding protein that promotes the stabilization of dynamic microtubules. Required for mitotic spindle formation. The protein is Protein STU1 (STU1) of Gibberella zeae (strain ATCC MYA-4620 / CBS 123657 / FGSC 9075 / NRRL 31084 / PH-1) (Wheat head blight fungus).